Reading from the N-terminus, the 334-residue chain is Aspartate carbamoyltransferase catalytic subunit (334 aa).

Carbamoyl phosphate contacts are provided by Arg71 and Thr72. Residue Lys99 coordinates L-aspartate. Residues Arg121, His151, and Gln154 each coordinate carbamoyl phosphate. The L-aspartate site is built by Arg184 and Arg239. Positions 280 and 281 each coordinate carbamoyl phosphate.

Belongs to the aspartate/ornithine carbamoyltransferase superfamily. ATCase family. As to quaternary structure, heterododecamer (2C3:3R2) of six catalytic PyrB chains organized as two trimers (C3), and six regulatory PyrI chains organized as three dimers (R2).

The catalysed reaction is carbamoyl phosphate + L-aspartate = N-carbamoyl-L-aspartate + phosphate + H(+). It functions in the pathway pyrimidine metabolism; UMP biosynthesis via de novo pathway; (S)-dihydroorotate from bicarbonate: step 2/3. In terms of biological role, catalyzes the condensation of carbamoyl phosphate and aspartate to form carbamoyl aspartate and inorganic phosphate, the committed step in the de novo pyrimidine nucleotide biosynthesis pathway. This Pseudomonas fluorescens biotype A protein is Aspartate carbamoyltransferase catalytic subunit.